A 148-amino-acid polypeptide reads, in one-letter code: [Ribosomal protein bS18]-alanine N-acetyltransferase (148 aa).

The 146-residue stretch at 2–147 (NTISSLETTD…DAIIMALPIS (146 aa)) folds into the N-acetyltransferase domain. 69-71 (IAV) contributes to the acetyl-CoA binding site. Glu103 serves as the catalytic Proton acceptor. An acetyl-CoA-binding site is contributed by Asn108. The active-site Proton donor is Tyr115.

This sequence belongs to the acetyltransferase family. RimI subfamily.

It is found in the cytoplasm. It carries out the reaction N-terminal L-alanyl-[ribosomal protein bS18] + acetyl-CoA = N-terminal N(alpha)-acetyl-L-alanyl-[ribosomal protein bS18] + CoA + H(+). Functionally, acetylates the N-terminal alanine of ribosomal protein bS18. This Escherichia coli O157:H7 protein is [Ribosomal protein bS18]-alanine N-acetyltransferase.